A 207-amino-acid polypeptide reads, in one-letter code: Ribosomal RNA small subunit methyltransferase G (207 aa).

S-adenosyl-L-methionine is bound by residues Gly73, Leu78, 124–125 (VE), and Arg139.

Belongs to the methyltransferase superfamily. RNA methyltransferase RsmG family.

The protein resides in the cytoplasm. The enzyme catalyses guanosine(527) in 16S rRNA + S-adenosyl-L-methionine = N(7)-methylguanosine(527) in 16S rRNA + S-adenosyl-L-homocysteine. Functionally, specifically methylates the N7 position of guanine in position 527 of 16S rRNA. The chain is Ribosomal RNA small subunit methyltransferase G from Klebsiella pneumoniae (strain 342).